The sequence spans 872 residues: Valine--tRNA ligase (872 aa).

The short motif at P45–N55 is the 'HIGH' region element. Positions K524–S528 match the 'KMSKS' region motif. Position 527 (K527) interacts with ATP.

It belongs to the class-I aminoacyl-tRNA synthetase family. ValS type 2 subfamily.

The protein resides in the cytoplasm. It catalyses the reaction tRNA(Val) + L-valine + ATP = L-valyl-tRNA(Val) + AMP + diphosphate. Its function is as follows. Catalyzes the attachment of valine to tRNA(Val). As ValRS can inadvertently accommodate and process structurally similar amino acids such as threonine, to avoid such errors, it has a 'posttransfer' editing activity that hydrolyzes mischarged Thr-tRNA(Val) in a tRNA-dependent manner. In Natronomonas pharaonis (strain ATCC 35678 / DSM 2160 / CIP 103997 / JCM 8858 / NBRC 14720 / NCIMB 2260 / Gabara) (Halobacterium pharaonis), this protein is Valine--tRNA ligase.